Consider the following 560-residue polypeptide: Dihydroxy-acid dehydratase (560 aa).

D80 provides a ligand contact to Mg(2+). C121 serves as a coordination point for [2Fe-2S] cluster. Mg(2+)-binding residues include D122 and K123. The residue at position 123 (K123) is an N6-carboxylysine. C194 is a [2Fe-2S] cluster binding site. Position 447 (E447) interacts with Mg(2+). S473 acts as the Proton acceptor in catalysis.

Belongs to the IlvD/Edd family. In terms of assembly, homodimer. Requires [2Fe-2S] cluster as cofactor. Mg(2+) is required as a cofactor.

The catalysed reaction is (2R)-2,3-dihydroxy-3-methylbutanoate = 3-methyl-2-oxobutanoate + H2O. It carries out the reaction (2R,3R)-2,3-dihydroxy-3-methylpentanoate = (S)-3-methyl-2-oxopentanoate + H2O. It participates in amino-acid biosynthesis; L-isoleucine biosynthesis; L-isoleucine from 2-oxobutanoate: step 3/4. The protein operates within amino-acid biosynthesis; L-valine biosynthesis; L-valine from pyruvate: step 3/4. Functions in the biosynthesis of branched-chain amino acids. Catalyzes the dehydration of (2R,3R)-2,3-dihydroxy-3-methylpentanoate (2,3-dihydroxy-3-methylvalerate) into 2-oxo-3-methylpentanoate (2-oxo-3-methylvalerate) and of (2R)-2,3-dihydroxy-3-methylbutanoate (2,3-dihydroxyisovalerate) into 2-oxo-3-methylbutanoate (2-oxoisovalerate), the penultimate precursor to L-isoleucine and L-valine, respectively. The protein is Dihydroxy-acid dehydratase of Chlorobaculum parvum (strain DSM 263 / NCIMB 8327) (Chlorobium vibrioforme subsp. thiosulfatophilum).